Reading from the N-terminus, the 371-residue chain is Chaperone protein DnaJ (371 aa).

One can recognise a J domain in the interval 4 to 68 (DYYKILGVSK…QKRAAYDRFG (65 aa)). The CR-type zinc finger occupies 134–212 (GIEKNISFSS…CHGMGRCHKQ (79 aa)). The Zn(2+) site is built by cysteine 147, cysteine 150, cysteine 164, cysteine 167, cysteine 186, cysteine 189, cysteine 200, and cysteine 203. CXXCXGXG motif repeat units follow at residues 147–154 (CDTCHGSG), 164–171 (CDACGGVG), 186–193 (CHKCKGNG), and 200–207 (CKKCHGMG).

Belongs to the DnaJ family. In terms of assembly, homodimer. Zn(2+) serves as cofactor.

The protein localises to the cytoplasm. In terms of biological role, participates actively in the response to hyperosmotic and heat shock by preventing the aggregation of stress-denatured proteins and by disaggregating proteins, also in an autonomous, DnaK-independent fashion. Unfolded proteins bind initially to DnaJ; upon interaction with the DnaJ-bound protein, DnaK hydrolyzes its bound ATP, resulting in the formation of a stable complex. GrpE releases ADP from DnaK; ATP binding to DnaK triggers the release of the substrate protein, thus completing the reaction cycle. Several rounds of ATP-dependent interactions between DnaJ, DnaK and GrpE are required for fully efficient folding. Also involved, together with DnaK and GrpE, in the DNA replication of plasmids through activation of initiation proteins. In Rickettsia akari (strain Hartford), this protein is Chaperone protein DnaJ.